An 837-amino-acid chain; its full sequence is WW domain-containing protein tag-325 (837 aa).

Polar residues predominate over residues 1–11 (MTTAVQPSDTT). Positions 1-66 (MTTAVQPSDT…SNGQNYADDP (66 aa)) are disordered. Residues 33–43 (SESAESSSSSS) show a composition bias toward low complexity. A compositionally biased stretch (polar residues) spans 44 to 61 (QTNVSAANTLPRESNGQN). One can recognise a WW domain in the interval 96–129 (RDLLNGWFEYETDVGRTFFFNKETGKSQWIPPRF). The segment covering 150–161 (TCSFQGSSTSSS) has biased composition (low complexity). 5 disordered regions span residues 150-181 (TCSFQGSSTSSSEEQKENKMRESLADDDRKSQ), 194-257 (DDVD…STAS), 338-403 (TTSS…EPAE), 548-574 (MRRRDDPMSQSAIETVSTSVSTDEPRP), and 778-800 (KNKKAGKKAKPSKKEETQATPVQ). The segment covering 162–181 (EEQKENKMRESLADDDRKSQ) has biased composition (basic and acidic residues). The segment covering 247 to 257 (PTSSRKASTAS) has biased composition (polar residues). Residues 371–403 (RCEERRGSGDGREPVRTIRCGDLERSENDEPAE) are compositionally biased toward basic and acidic residues. One can recognise a PH domain in the interval 386-505 (RTIRCGDLER…WYKSLEEVVA (120 aa)). Over residues 556–569 (SQSAIETVSTSVST) the composition is skewed to polar residues. In terms of domain architecture, Rho-GAP spans 610-827 (STLSAICQHE…YLLESANKFD (218 aa)). Residues 778-788 (KNKKAGKKAKP) are compositionally biased toward basic residues.

This is WW domain-containing protein tag-325 (tag-325) from Caenorhabditis elegans.